The following is a 74-amino-acid chain: Translation initiation factor IF-1 (74 aa).

The 72-residue stretch at 1-72 folds into the S1-like domain; the sequence is MAKQDAIEME…TKGRITYRLR (72 aa).

It belongs to the IF-1 family. In terms of assembly, component of the 30S ribosomal translation pre-initiation complex which assembles on the 30S ribosome in the order IF-2 and IF-3, IF-1 and N-formylmethionyl-tRNA(fMet); mRNA recruitment can occur at any time during PIC assembly.

It is found in the cytoplasm. Its function is as follows. One of the essential components for the initiation of protein synthesis. Stabilizes the binding of IF-2 and IF-3 on the 30S subunit to which N-formylmethionyl-tRNA(fMet) subsequently binds. Helps modulate mRNA selection, yielding the 30S pre-initiation complex (PIC). Upon addition of the 50S ribosomal subunit IF-1, IF-2 and IF-3 are released leaving the mature 70S translation initiation complex. The protein is Translation initiation factor IF-1 of Acaryochloris marina (strain MBIC 11017).